Here is a 478-residue protein sequence, read N- to C-terminus: Proline--tRNA ligase (478 aa).

It belongs to the class-II aminoacyl-tRNA synthetase family. ProS type 3 subfamily. As to quaternary structure, homodimer.

Its subcellular location is the cytoplasm. It catalyses the reaction tRNA(Pro) + L-proline + ATP = L-prolyl-tRNA(Pro) + AMP + diphosphate. In terms of biological role, catalyzes the attachment of proline to tRNA(Pro) in a two-step reaction: proline is first activated by ATP to form Pro-AMP and then transferred to the acceptor end of tRNA(Pro). The chain is Proline--tRNA ligase from Clostridium botulinum (strain ATCC 19397 / Type A).